The sequence spans 353 residues: Pupal cuticle protein PCP52 (353 aa).

Residues methionine 1 to alanine 15 form the signal peptide. The segment at alanine 166–alanine 195 is disordered. Residues aspartate 179–glutamate 189 show a composition bias toward polar residues.

Its function is as follows. Component of the cuticle of the pupa of Galleria mellonella. The sequence is that of Pupal cuticle protein PCP52 (PCP52) from Galleria mellonella (Greater wax moth).